Here is a 149-residue protein sequence, read N- to C-terminus: Cytochrome c-type biogenesis protein CcmE (149 aa).

Over 1–7 the chain is Cytoplasmic; that stretch reads MKKRHQR. The chain crosses the membrane as a helical; Signal-anchor for type II membrane protein span at residues 8 to 28; the sequence is LFLVLGVVAGVSVATALVLNA. The Periplasmic portion of the chain corresponds to 29 to 149; the sequence is FRDNMTFFIT…EHSVDEVGDY (121 aa). Heme is bound by residues His123 and Tyr127.

It belongs to the CcmE/CycJ family.

It localises to the cell inner membrane. In terms of biological role, heme chaperone required for the biogenesis of c-type cytochromes. Transiently binds heme delivered by CcmC and transfers the heme to apo-cytochromes in a process facilitated by CcmF and CcmH. The polypeptide is Cytochrome c-type biogenesis protein CcmE (Halorhodospira halophila (strain DSM 244 / SL1) (Ectothiorhodospira halophila (strain DSM 244 / SL1))).